A 594-amino-acid polypeptide reads, in one-letter code: Transcriptional repressor p66-beta (594 aa).

The residue at position 17 (Ser17) is a Phosphoserine. Glycyl lysine isopeptide (Lys-Gly) (interchain with G-Cter in SUMO2) cross-links involve residues Lys33 and Lys66. The tract at residues 62–143 (ELPTKQDGSG…ASSPRSSSRM (82 aa)) is disordered. Positions 74-89 (GYEEKLNGNLRPHGDN) are enriched in basic and acidic residues. A Glycyl lysine isopeptide (Lys-Gly) (interchain with G-Cter in SUMO2) cross-link involves residue Lys98. Basic and acidic residues predominate over residues 109 to 119 (SARRSEPDRGR). At Thr121 the chain carries Phosphothreonine. Residues Ser123, Ser130, Ser135, and Ser136 each carry the phosphoserine modification. Low complexity predominate over residues 130 to 140 (SDNEASSPRSS). Residues 141 to 195 (SRMEERLKAANLEMFKGKGMEERQQLIKQLRDELRLEEARLVLLKKLRQSQLQKE) adopt a coiled-coil conformation. A Glycyl lysine isopeptide (Lys-Gly) (interchain with G-Cter in SUMO2) cross-link involves residue Lys148. A CR1; interaction with MBD2 and MBD3 region spans residues 166–191 (LIKQLRDELRLEEARLVLLKKLRQSQ). Residue Lys200 forms a Glycyl lysine isopeptide (Lys-Gly) (interchain with G-Cter in SUMO2) linkage. Ser209 carries the post-translational modification Phosphoserine. A disordered region spans residues 214–237 (SPAHVGQQGLSKLPSRPGAQGIEP). Lys282 is covalently cross-linked (Glycyl lysine isopeptide (Lys-Gly) (interchain with G-Cter in SUMO2)). Residues Ser334, Ser339, and Ser341 each carry the phosphoserine modification. Positions 341–481 (SAMSDAANSQ…QEQEIEQRLQ (141 aa)) are CR2; histone tail-binding. Residues Lys354, Lys455, and Lys468 each participate in a glycyl lysine isopeptide (Lys-Gly) (interchain with G-Cter in SUMO2) cross-link. The GATA-type zinc-finger motif lies at 415–468 (RVEPFVCAQCRTDFTPHWKQEKNGKILCEQCMTSNQKKALKAEHTNRLKNAFVK). A coiled-coil region spans residues 450–483 (QKKALKAEHTNRLKNAFVKALQQEQEIEQRLQQQ). Ser487 is subject to Phosphoserine. A Glycyl lysine isopeptide (Lys-Gly) (interchain with G-Cter in SUMO2) cross-link involves residue Lys499.

In terms of assembly, homooligomer. Component of the nucleosome remodeling and deacetylase (NuRD) repressor complex, composed of core proteins MTA1, MTA2, MTA3, RBBP4, RBBP7, HDAC1, HDAC2, MBD2, MBD3, and peripherally associated proteins CDK2AP1, CDK2AP2, GATAD2A, GATAD2B, CHD3, CHD4 and CHD5. The exact stoichiometry of the NuRD complex is unknown, and some subunits such as MBD2 and MBD3, GATAD2A and GATAD2B, and CHD3, CHD4 and CHD5 define mutually exclusive NuRD complexes. Interacts with MBD2; this is required for the enhancement of MBD2-mediated repression and for targeting to the chromatin. Interacts with MBD3. Component of the MeCP1 histone deacetylase complex. Interacts with histone tails, including that of histones H2A, H2B, H3 and H4. Interacts with ERCC6.

The protein localises to the nucleus speckle. Its subcellular location is the nucleus. It localises to the chromosome. In terms of biological role, transcriptional repressor. Acts as a component of the histone deacetylase NuRD complex which participates in the remodeling of chromatin. Enhances MBD2-mediated repression. Efficient repression requires the presence of GATAD2A. Targets MBD3 to discrete loci in the nucleus. May play a role in synapse development. In Mus musculus (Mouse), this protein is Transcriptional repressor p66-beta (Gatad2b).